Here is a 430-residue protein sequence, read N- to C-terminus: Neuropeptide FF receptor 1 (430 aa).

A disordered region spans residues Met-1–Thr-20. The Extracellular portion of the chain corresponds to Met-1–Ala-43. Polar residues predominate over residues Pro-9–Thr-20. N-linked (GlcNAc...) asparagine glycosylation is found at Asn-10, Asn-18, and Asn-29. The chain crosses the membrane as a helical span at residues Ala-44–Val-64. The Cytoplasmic segment spans residues Cys-65–Met-80. Residues Phe-81 to Leu-101 traverse the membrane as a helical segment. The Extracellular segment spans residues Val-102 to Lys-117. N-linked (GlcNAc...) asparagine glycosylation occurs at Asn-113. An intrachain disulfide couples Cys-116 to Cys-203. A helical transmembrane segment spans residues Met-118–Ala-138. Residues Val-139 to Ala-158 are Cytoplasmic-facing. Residues Leu-159–Thr-179 form a helical membrane-spanning segment. Over Leu-180–Arg-214 the chain is Extracellular. N-linked (GlcNAc...) asparagine glycosylation occurs at Asn-195. Residues Val-215–Met-235 traverse the membrane as a helical segment. Residues Tyr-236–Met-271 are Cytoplasmic-facing. A helical membrane pass occupies residues Leu-272 to Leu-292. The Extracellular segment spans residues Ile-293–Thr-307. A helical membrane pass occupies residues Val-308–Ile-328. Over Tyr-329–Ile-430 the chain is Cytoplasmic. Residues Ser-379–Gly-404 show a composition bias toward low complexity. The disordered stretch occupies residues Ser-379–Arg-413.

Belongs to the G-protein coupled receptor 1 family.

The protein resides in the cell membrane. Receptor for NPAF (A-18-F-amide) and NPFF (F-8-F-amide) neuropeptides, also known as morphine-modulating peptides. Can also be activated by a variety of naturally occurring or synthetic FMRF-amide like ligands. This receptor mediates its action by association with G proteins that activate a phosphatidylinositol-calcium second messenger system. The chain is Neuropeptide FF receptor 1 from Homo sapiens (Human).